The chain runs to 408 residues: MSVMDEIVVTKPQARTSASLEKPSLIGMSREEMGAALREKGVAEKQIKMRVSQLWNWIYVRGVSDFDHMTNVAKDMREMLKQHFTIARPEIVEEQVSNDGTRKWLLRFPPRGAGRPVEIEAVYIPEEGRGTLCISSQVGCTLTCSFCHTGTQRLVRNLTAEEILSQLLLARDRLGDFPDREAPQGTIMPAEGRKVSNIVMMGMGEPLYNFDAVKQALLIATDGDGLSLSRRRVTLSTSGVVPEIFRTGEEIGVMLAISLHAVRDDLRDLLVPINKKYPLKELIEACRTYPGLSNARRITFEYVMLKDVNDSLEDAKGLIKLLKGVPAKINLIPFNPWPGTNYQCSDWEQIEKFADFINSAGYASPIRTPRGRDILAACGQLKSESERMRKTERLAFEAMMIANHGADD.

The active-site Proton acceptor is glutamate 120. One can recognise a Radical SAM core domain in the interval 126–375 (EEGRGTLCIS…IRTPRGRDIL (250 aa)). An intrachain disulfide couples cysteine 133 to cysteine 378. Positions 140, 144, and 147 each coordinate [4Fe-4S] cluster. S-adenosyl-L-methionine-binding positions include 204–205 (GE), serine 236, 258–260 (SLH), and asparagine 335. Residue cysteine 378 is the S-methylcysteine intermediate of the active site.

The protein belongs to the radical SAM superfamily. RlmN family. [4Fe-4S] cluster serves as cofactor.

It localises to the cytoplasm. It carries out the reaction adenosine(2503) in 23S rRNA + 2 reduced [2Fe-2S]-[ferredoxin] + 2 S-adenosyl-L-methionine = 2-methyladenosine(2503) in 23S rRNA + 5'-deoxyadenosine + L-methionine + 2 oxidized [2Fe-2S]-[ferredoxin] + S-adenosyl-L-homocysteine. It catalyses the reaction adenosine(37) in tRNA + 2 reduced [2Fe-2S]-[ferredoxin] + 2 S-adenosyl-L-methionine = 2-methyladenosine(37) in tRNA + 5'-deoxyadenosine + L-methionine + 2 oxidized [2Fe-2S]-[ferredoxin] + S-adenosyl-L-homocysteine. Specifically methylates position 2 of adenine 2503 in 23S rRNA and position 2 of adenine 37 in tRNAs. m2A2503 modification seems to play a crucial role in the proofreading step occurring at the peptidyl transferase center and thus would serve to optimize ribosomal fidelity. The protein is Dual-specificity RNA methyltransferase RlmN of Rhizobium johnstonii (strain DSM 114642 / LMG 32736 / 3841) (Rhizobium leguminosarum bv. viciae).